Here is a 334-residue protein sequence, read N- to C-terminus: Malate dehydrogenase 2 (334 aa).

NAD(+) is bound at residue 12–18 (GAAGRVA). Substrate is bound by residues arginine 93 and arginine 99. Residues asparagine 106, glutamine 113, and 130–132 (VGN) contribute to the NAD(+) site. Residues asparagine 132 and arginine 166 each coordinate substrate. The active-site Proton acceptor is the histidine 191.

It belongs to the LDH/MDH superfamily. MDH type 2 family.

It catalyses the reaction (S)-malate + NAD(+) = oxaloacetate + NADH + H(+). Functionally, catalyzes the reversible oxidation of malate to oxaloacetate. The polypeptide is Malate dehydrogenase 2 (Albidiferax ferrireducens (strain ATCC BAA-621 / DSM 15236 / T118) (Rhodoferax ferrireducens)).